A 175-amino-acid polypeptide reads, in one-letter code: NADH-quinone oxidoreductase subunit B (175 aa).

Residues C49, C50, C115, and C145 each contribute to the [4Fe-4S] cluster site.

This sequence belongs to the complex I 20 kDa subunit family. NDH-1 is composed of 14 different subunits. Subunits NuoB, C, D, E, F, and G constitute the peripheral sector of the complex. [4Fe-4S] cluster is required as a cofactor.

It localises to the cell membrane. It catalyses the reaction a quinone + NADH + 5 H(+)(in) = a quinol + NAD(+) + 4 H(+)(out). Functionally, NDH-1 shuttles electrons from NADH, via FMN and iron-sulfur (Fe-S) centers, to quinones in the respiratory chain. The immediate electron acceptor for the enzyme in this species is believed to be a menaquinone. Couples the redox reaction to proton translocation (for every two electrons transferred, four hydrogen ions are translocated across the cytoplasmic membrane), and thus conserves the redox energy in a proton gradient. This Heliobacterium modesticaldum (strain ATCC 51547 / Ice1) protein is NADH-quinone oxidoreductase subunit B.